A 55-amino-acid chain; its full sequence is Large ribosomal subunit protein eL37 (55 aa).

4 residues coordinate Zn(2+): cysteine 20, cysteine 23, cysteine 35, and cysteine 38. A C4-type zinc finger spans residues 20–38 (CRRCGKNSYHKRHHRCSSC).

The protein belongs to the eukaryotic ribosomal protein eL37 family. Zn(2+) is required as a cofactor.

Functionally, binds to the 23S rRNA. The protein is Large ribosomal subunit protein eL37 of Cenarchaeum symbiosum (strain A).